The following is an 817-amino-acid chain: Probable beta-glucosidase G (817 aa).

The N-terminal stretch at 1–20 is a signal peptide; the sequence is MANIAHLIVSGLLAATVAHG. Residues N40, N58, N229, and N276 are each glycosylated (N-linked (GlcNAc...) asparagine). The active site involves D304. N-linked (GlcNAc...) asparagine glycosylation is found at N343, N350, N402, N507, N563, N584, N623, N662, N679, and N715.

The protein belongs to the glycosyl hydrolase 3 family.

The protein localises to the secreted. It carries out the reaction Hydrolysis of terminal, non-reducing beta-D-glucosyl residues with release of beta-D-glucose.. It functions in the pathway glycan metabolism; cellulose degradation. Beta-glucosidases are one of a number of cellulolytic enzymes involved in the degradation of cellulosic biomass. Catalyzes the last step releasing glucose from the inhibitory cellobiose. The chain is Probable beta-glucosidase G (bglG) from Aspergillus terreus (strain NIH 2624 / FGSC A1156).